A 448-amino-acid chain; its full sequence is MKGFIDDVDYSVGLLDEGTNLGNVIDNYVYEHTLTGKNAFFVGDLGKIVKKHSQWQNVVAQIKPFYTVKCNSAPAVLEILAALGTGFACSSKNEMALVQELGVPPENIIYISPCKQVSQIKYAAKVGVNIMTCDNEIELKKIARNHPNAKVLLHIATEDNIGGEEGNMKFGTTLKNCRHLLECAKELDVQIIGVKFHVSSACKESQVYVHALSDARCVFDMAGEIGFTMNMLDIGGGFTGTEFQLEEVNHVISPLLDVYFPEGSGVKIISEPGSYYVSSAFTLAVNIIAKKVVENDKFPSGVEKTGSDEPAFMYYMNDGVYGSFASKLSEDLNTIPEVHKKYKEDEPLFTSSLWGPSCDELDQIVESCLLPELNVGDWLIFDNMGADSFHEPSAFNDFQRPAIYYMMSFSDWYEMQDAGITSDSMMKNFFFVPSCIQLSQEDSFSAEA.

The protein belongs to the Orn/Lys/Arg decarboxylase class-II family. ODC antizyme inhibitor subfamily. Monomer. Interacts with OAZ1 and OAZ3; this interaction disrupts the interaction between the antizyme and ODC1. In terms of processing, ubiquitinated, leading to its proteasomal degradation; a process that is reduced in presence of antizyme OAZ1.

The protein resides in the nucleus. Antizyme inhibitor (AZI) protein that positively regulates ornithine decarboxylase (ODC) activity and polyamine uptake. AZI is an enzymatically inactive ODC homolog that counteracts the negative effect of ODC antizymes (AZs) OAZ1, OAZ2 and OAZ3 on ODC activity by competing with ODC for antizyme-binding. Inhibits antizyme-dependent ODC degradation and releases ODC monomers from their inactive complex with antizymes, leading to formation of the catalytically active ODC homodimer and restoring polyamine production. The protein is Antizyme inhibitor 1 (AZIN1) of Pongo abelii (Sumatran orangutan).